The following is a 130-amino-acid chain: Small ribosomal subunit protein uS11 (130 aa).

It belongs to the universal ribosomal protein uS11 family. As to quaternary structure, part of the 30S ribosomal subunit. Interacts with proteins S7 and S18. Binds to IF-3.

Located on the platform of the 30S subunit, it bridges several disparate RNA helices of the 16S rRNA. Forms part of the Shine-Dalgarno cleft in the 70S ribosome. The protein is Small ribosomal subunit protein uS11 of Sulfurimonas denitrificans (strain ATCC 33889 / DSM 1251) (Thiomicrospira denitrificans (strain ATCC 33889 / DSM 1251)).